A 99-amino-acid chain; its full sequence is NADH-quinone oxidoreductase subunit K 1 (99 aa).

The next 3 membrane-spanning stretches (helical) occupy residues Pro-3–Val-23, Ile-28–Phe-48, and Ile-59–Ile-79.

Belongs to the complex I subunit 4L family. As to quaternary structure, NDH-1 is composed of 14 different subunits. Subunits NuoA, H, J, K, L, M, N constitute the membrane sector of the complex.

It localises to the cell membrane. The catalysed reaction is a quinone + NADH + 5 H(+)(in) = a quinol + NAD(+) + 4 H(+)(out). NDH-1 shuttles electrons from NADH, via FMN and iron-sulfur (Fe-S) centers, to quinones in the respiratory chain. The immediate electron acceptor for the enzyme in this species is believed to be a menaquinone. Couples the redox reaction to proton translocation (for every two electrons transferred, four hydrogen ions are translocated across the cytoplasmic membrane), and thus conserves the redox energy in a proton gradient. This Streptomyces griseus subsp. griseus (strain JCM 4626 / CBS 651.72 / NBRC 13350 / KCC S-0626 / ISP 5235) protein is NADH-quinone oxidoreductase subunit K 1.